A 600-amino-acid polypeptide reads, in one-letter code: Glutamine--fructose-6-phosphate aminotransferase [isomerizing] (600 aa).

The active-site Nucleophile; for GATase activity is the Cys-2. The Glutamine amidotransferase type-2 domain occupies 2 to 217; the sequence is CGIVGYIGQL…DKEMVIVTDD (216 aa). SIS domains are found at residues 283–422 and 452–590; these read IAAA…KNGI and IARE…VDKP. The active-site For Fru-6P isomerization activity is Lys-595.

Homodimer.

It localises to the cytoplasm. It carries out the reaction D-fructose 6-phosphate + L-glutamine = D-glucosamine 6-phosphate + L-glutamate. In terms of biological role, catalyzes the first step in hexosamine metabolism, converting fructose-6P into glucosamine-6P using glutamine as a nitrogen source. The protein is Glutamine--fructose-6-phosphate aminotransferase [isomerizing] (glmS) of Bacillus spizizenii (strain ATCC 23059 / NRRL B-14472 / W23) (Bacillus subtilis subsp. spizizenii).